The primary structure comprises 331 residues: Thiamine-monophosphate kinase (331 aa).

Aspartate 43, threonine 59, threonine 60, and aspartate 61 together coordinate Mg(2+). Histidine 68 provides a ligand contact to substrate. 3 residues coordinate Mg(2+): aspartate 90, aspartate 138, and aspartate 231. 137 to 138 (GD) contributes to the ATP binding site. ATP is bound at residue serine 233. Aspartate 234 contributes to the Mg(2+) binding site. Residues glutamate 284 and tryptophan 328 each coordinate substrate.

This sequence belongs to the thiamine-monophosphate kinase family.

It carries out the reaction thiamine phosphate + ATP = thiamine diphosphate + ADP. It participates in cofactor biosynthesis; thiamine diphosphate biosynthesis; thiamine diphosphate from thiamine phosphate: step 1/1. Functionally, catalyzes the ATP-dependent phosphorylation of thiamine-monophosphate (TMP) to form thiamine-pyrophosphate (TPP), the active form of vitamin B1. In Corynebacterium glutamicum (strain ATCC 13032 / DSM 20300 / JCM 1318 / BCRC 11384 / CCUG 27702 / LMG 3730 / NBRC 12168 / NCIMB 10025 / NRRL B-2784 / 534), this protein is Thiamine-monophosphate kinase.